The primary structure comprises 377 residues: Early estrogen-induced gene 1 protein (377 aa).

The 144-residue stretch at 2–145 folds into the C2 NT-type domain; the sequence is AFLTKKKKFK…ILKVNIGMSL (144 aa). Composition is skewed to polar residues over residues 160-173, 188-198, and 222-234; these read KTVS…SLQM, VRQNRSRQAML, and SRNS…QSKI. Positions 160–313 are disordered; sequence KTVSPPGQDS…SVESQPTWVD (154 aa). Residues 256–269 are compositionally biased toward low complexity; the sequence is TSTSSSVSGGLSLT. Basic and acidic residues predominate over residues 274–285; that stretch reads EPERDVKPEKPP.

It belongs to the EEIG family.

The protein localises to the nucleus. Its subcellular location is the cytoplasm. Its function is as follows. May be involved in osteoclast differentiation. This Xenopus laevis (African clawed frog) protein is Early estrogen-induced gene 1 protein (eeig1).